The chain runs to 374 residues: Histidinol-phosphate aminotransferase 2 (374 aa).

N6-(pyridoxal phosphate)lysine is present on Lys-227.

The protein belongs to the class-II pyridoxal-phosphate-dependent aminotransferase family. Histidinol-phosphate aminotransferase subfamily. In terms of assembly, homodimer. It depends on pyridoxal 5'-phosphate as a cofactor.

The catalysed reaction is L-histidinol phosphate + 2-oxoglutarate = 3-(imidazol-4-yl)-2-oxopropyl phosphate + L-glutamate. Its pathway is amino-acid biosynthesis; L-histidine biosynthesis; L-histidine from 5-phospho-alpha-D-ribose 1-diphosphate: step 7/9. The protein is Histidinol-phosphate aminotransferase 2 (hisC2) of Ralstonia nicotianae (strain ATCC BAA-1114 / GMI1000) (Ralstonia solanacearum).